Here is a 614-residue protein sequence, read N- to C-terminus: Acetylcholinesterase (614 aa).

The signal sequence occupies residues 1-31 (MRPPQCLLHTPSLASPLLLLLLWLLGGGVGA). Cysteines 100 and 127 form a disulfide. Trp117 serves as a coordination point for galanthamine. Trp117 lines the huperzine A pocket. Gly153 serves as a coordination point for huprine W. Tyr164 contacts huperzine A. 233–234 (ES) lines the galanthamine pocket. Residue Ser234 coordinates huprine W. The active-site Acyl-ester intermediate is Ser234. Cys288 and Cys303 are joined by a disulfide. An N-linked (GlcNAc...) asparagine glycan is attached at Asn296. The active-site Charge relay system is the Glu365. Tyr368 contributes to the galanthamine binding site. Tyr368 is a huperzine A binding site. N-linked (GlcNAc...) asparagine glycosylation is present at Asn381. Cys440 and Cys560 are joined by a disulfide. Huprine W contacts are provided by Trp470 and His478. The active-site Charge relay system is His478. The N-linked (GlcNAc...) asparagine glycan is linked to Asn495. The GPI-anchor amidated glycine moiety is linked to residue Phe588.

It belongs to the type-B carboxylesterase/lipase family. As to quaternary structure, interacts with PRIMA1. The interaction with PRIMA1 is required to anchor it to the basal lamina of cells and organize into tetramers. Isoform H generates GPI-anchored dimers; disulfide linked. Isoform T generates multiple structures, ranging from monomers and dimers to collagen-tailed and hydrophobic-tailed forms, in which catalytic tetramers are associated with anchoring proteins that attach them to the basal lamina or to cell membranes. In the collagen-tailed forms, isoform T subunits are associated with a specific collagen, COLQ, which triggers the formation of isoform T tetramers, from monomers and dimers. Isoform R may be monomeric. Isoform H is highly expressed in erythrocytes.

The protein resides in the synapse. The protein localises to the secreted. It is found in the cell membrane. It localises to the nucleus. It catalyses the reaction acetylcholine + H2O = choline + acetate + H(+). Functionally, hydrolyzes rapidly the acetylcholine neurotransmitter released into the synaptic cleft allowing to terminate the signal transduction at the neuromuscular junction. Role in neuronal apoptosis. The protein is Acetylcholinesterase of Homo sapiens (Human).